The sequence spans 448 residues: C4-dicarboxylate transport protein 2 (448 aa).

9 helical membrane-spanning segments follow: residues 13–33 (SLYVQVLAAVTIGVLLGHFSP), 49–69 (LIKMIIAPIIFCTVVIGIAGM), 81–101 (LALLYFEVMSTLALVIGLIVV), 149–169 (AFAKGEILQVLLFSVLFGFAL), 193–213 (IVGIIMKVAPIGAFGAMAFTI), 227–247 (LMGAFYLTCLIFVFVVLGIVS), 294–314 (VVGLVIPTGYSFNLDGTSIYL), 335–355 (ITLLAVLMLTSKGAAGITGSG), and 357–377 (IVLAATLSAVGGVPVAGLALI).

Belongs to the dicarboxylate/amino acid:cation symporter (DAACS) (TC 2.A.23) family.

The protein localises to the cell inner membrane. Responsible for the transport of dicarboxylates such as succinate, fumarate, and malate from the periplasm across the membrane. This is C4-dicarboxylate transport protein 2 from Polaromonas naphthalenivorans (strain CJ2).